Reading from the N-terminus, the 977-residue chain is RNA-binding protein 15 (977 aa).

Composition is skewed to basic and acidic residues over residues 1 to 10 (MRTAGRDPVP), 35 to 52 (RGDD…ERSP), 59 to 72 (RGGE…ERSK), and 98 to 113 (LHLD…REYD). The segment at 1 to 167 (MRTAGRDPVP…SSAPGGGDGA (167 aa)) is disordered. Phosphoserine is present on serine 109. Low complexity predominate over residues 119-130 (SSSRLHSYSSPS). Positions 135-150 (SGGGESRSSSRGGGGE) are enriched in gly residues. Residues 151-160 (SRSSGAASSA) are compositionally biased toward low complexity. The 83-residue stretch at 170–252 (KTLKISELGS…RPLKIEAVYV (83 aa)) folds into the RRM 1 domain. A phosphoserine mark is found at serine 179, serine 208, and serine 210. Residue lysine 246 forms a Glycyl lysine isopeptide (Lys-Gly) (interchain with G-Cter in SUMO2) linkage. Phosphoserine occurs at positions 253, 257, and 259. Positions 256–298 (RSRSPLDKDTYPPSASVVGASVGGHRHPPGGGGGQRSLSPGGA) are disordered. Position 266 is a phosphotyrosine (tyrosine 266). Phosphoserine is present on residues serine 292, serine 294, and serine 365. RRM domains are found at residues 374-451 (RTLF…YGKA) and 455-529 (TRLW…FADT). Residues lysine 406, lysine 420, and lysine 445 each participate in a glycyl lysine isopeptide (Lys-Gly) (interchain with G-Cter in SUMO2) cross-link. Position 450 is an N6-acetyllysine (lysine 450). Basic and acidic residues-rich tracts occupy residues 555–581 (HRAP…RDLY) and 613–661 (SLDR…ESDR). A disordered region spans residues 555 to 778 (HRAPDPLRGA…KQDGGTAPVA (224 aa)). Position 568 is a phosphothreonine (threonine 568). Arginine 578 is subject to Asymmetric dimethylarginine; alternate; by PRMT1. An Omega-N-methylarginine; alternate; by PRMT1 modification is found at arginine 578. Serine 622, serine 656, serine 670, serine 674, serine 700, and serine 741 each carry phosphoserine. Composition is skewed to basic and acidic residues over residues 673-728 (RSPE…AERD) and 741-750 (SPLKKEDRSD). Residue lysine 744 forms a Glycyl lysine isopeptide (Lys-Gly) (interchain with G-Cter in SUMO2) linkage. Residues 752–771 (SAPSTSTASSKLKSPSQKQD) show a composition bias toward polar residues. Residues serine 765, serine 767, and serine 781 each carry the phosphoserine modification. Residues 777–956 (VASASPKLCL…YLVMIIVRGF (180 aa)) enclose the SPOC domain. The disordered stretch occupies residues 865 to 884 (GSSDSRSSSSSAASDTATST). Positions 866–884 (SSDSRSSSSSAASDTATST) are enriched in low complexity. Position 935 is a phosphoserine (serine 935).

The protein belongs to the RRM Spen family. As to quaternary structure, component of the WMM complex, a N6-methyltransferase complex composed of a catalytic subcomplex, named MAC, and of an associated subcomplex, named MACOM. The MAC subcomplex is composed of METTL3 and METTL14. The MACOM subcomplex is composed of WTAP, ZC3H13, CBLL1/HAKAI, VIRMA, and, in some cases of RBM15 (RBM15 or RBM15B). Also a component of a MACOM-like complex, named WTAP complex, composed of WTAP, ZC3H13, CBLL1, VIRMA, RBM15, BCLAF1 and THRAP3. Interacts with RBPJ. Interacts (via SPOC domain) with SETD1B. Interacts with NXF1, the interaction is required to promote mRNA export. Interacts with SF3B1. (Microbial infection) Interacts with Epstein-Barr virus BSFL2/BMLF1. In terms of processing, methylated at Arg-578 by PRMT1, leading to promote ubiquitination by CNOT4 and subsequent degradation by the proteasome. Ubiquitinated by CNOT4 following methylation at Arg-578 by PRMT1.

The protein resides in the nucleus speckle. It localises to the nucleus. It is found in the nucleoplasm. The protein localises to the nucleus envelope. Its subcellular location is the nucleus membrane. Functionally, RNA-binding protein that acts as a key regulator of N6-methyladenosine (m6A) methylation of RNAs, thereby regulating different processes, such as hematopoietic cell homeostasis, alternative splicing of mRNAs and X chromosome inactivation mediated by Xist RNA. Associated component of the WMM complex, a complex that mediates N6-methyladenosine (m6A) methylation of RNAs, a modification that plays a role in the efficiency of mRNA splicing and RNA processing. Plays a key role in m6A methylation, possibly by binding target RNAs and recruiting the WMM complex. Involved in random X inactivation mediated by Xist RNA: acts by binding Xist RNA and recruiting the WMM complex, which mediates m6A methylation, leading to target YTHDC1 reader on Xist RNA and promoting transcription repression activity of Xist. Required for the development of multiple tissues, such as the maintenance of the homeostasis of long-term hematopoietic stem cells and for megakaryocyte (MK) and B-cell differentiation. Regulates megakaryocyte differentiation by regulating alternative splicing of genes important for megakaryocyte differentiation; probably regulates alternative splicing via m6A regulation. Required for placental vascular branching morphogenesis and embryonic development of the heart and spleen. Acts as a regulator of thrombopoietin response in hematopoietic stem cells by regulating alternative splicing of MPL. May also function as an mRNA export factor, stimulating export and expression of RTE-containing mRNAs which are present in many retrotransposons that require to be exported prior to splicing. High affinity binding of pre-mRNA to RBM15 may allow targeting of the mRNP to the export helicase DBP5 in a manner that is independent of splicing-mediated NXF1 deposition, resulting in export prior to splicing. May be implicated in HOX gene regulation. The protein is RNA-binding protein 15 of Homo sapiens (Human).